The sequence spans 492 residues: Putative heme-binding protein VNG_2021C (492 aa).

His177 is a heme binding site. Positions 253–301 (AGERVPAPEGGADAHGEGERTHHHGDSDHHDGDDGEQHHHSTGDEADDG) are disordered. Basic and acidic residues predominate over residues 264–301 (ADAHGEGERTHHHGDSDHHDGDDGEQHHHSTGDEADDG). The region spanning 402 to 490 (GTMGMFYETK…VLADRPRHVF (89 aa)) is the ABM domain.

This sequence in the N-terminal section; belongs to the ChdC family.

This Halobacterium salinarum (strain ATCC 700922 / JCM 11081 / NRC-1) (Halobacterium halobium) protein is Putative heme-binding protein VNG_2021C.